Consider the following 370-residue polypeptide: Forkhead box protein I1-A (370 aa).

Disordered stretches follow at residues 1-28, 212-269, and 342-370; these read MNPVQQPAQHKCPASSLNPPHPKRAQEA, DNGN…CPSP, and SSLPTSNQKQPPYLQQLHPQQSPLYQGRY. A DNA-binding region (fork-head) is located at residues 127–221; the sequence is RPPYSYSALI…DNGNFRRKRK (95 aa). A compositionally biased stretch (basic and acidic residues) spans 232-245; that stretch reads AKREEDHVSPKGKE. Low complexity predominate over residues 349 to 370; it reads QKQPPYLQQLHPQQSPLYQGRY.

As to expression, initially localized to the animal hemisphere (the presumptive ectoderm) of early-mid blastula embryos. Becomes restricted to head placodes, excluding the otic placodes, by the tailbud stages.

Its subcellular location is the nucleus. Functionally, transcription factor. Essential for ventral specification of the early cephalic (head) ectoderm during gastrulation, playing a role in the non-neural versus neural cell fate choice. Binds to DNA via the target sequence 5'-[AG]TAAA[CT]A-3', with 5'-ATAAACA-3' being the preferred binding site. The chain is Forkhead box protein I1-A (foxi1-a) from Xenopus laevis (African clawed frog).